The sequence spans 307 residues: ATP synthase gamma chain (307 aa).

Belongs to the ATPase gamma chain family. F-type ATPases have 2 components, CF(1) - the catalytic core - and CF(0) - the membrane proton channel. CF(1) has five subunits: alpha(3), beta(3), gamma(1), delta(1), epsilon(1). CF(0) has three main subunits: a, b and c.

Its subcellular location is the cell membrane. Produces ATP from ADP in the presence of a proton gradient across the membrane. The gamma chain is believed to be important in regulating ATPase activity and the flow of protons through the CF(0) complex. This Bifidobacterium longum subsp. infantis (strain ATCC 15697 / DSM 20088 / JCM 1222 / NCTC 11817 / S12) protein is ATP synthase gamma chain.